The sequence spans 255 residues: tRNA uridine(34) hydroxylase (255 aa).

The 95-residue stretch at 125–219 (AAPDTLLIDT…YLEGIPESES (95 aa)) folds into the Rhodanese domain. The Cysteine persulfide intermediate role is filled by cysteine 179.

It belongs to the TrhO family.

It catalyses the reaction uridine(34) in tRNA + AH2 + O2 = 5-hydroxyuridine(34) in tRNA + A + H2O. Catalyzes oxygen-dependent 5-hydroxyuridine (ho5U) modification at position 34 in tRNAs. The polypeptide is tRNA uridine(34) hydroxylase (Nitrobacter hamburgensis (strain DSM 10229 / NCIMB 13809 / X14)).